Here is a 454-residue protein sequence, read N- to C-terminus: Bifunctional protein GlmU (454 aa).

The tract at residues M1–R226 is pyrophosphorylase. UDP-N-acetyl-alpha-D-glucosamine contacts are provided by residues L8–G11, K22, Q73, G78–T79, Y100–D102, G137, E151, N166, and N224. D102 is a Mg(2+) binding site. N224 provides a ligand contact to Mg(2+). The segment at V227–E247 is linker. The interval G248–K454 is N-acetyltransferase. UDP-N-acetyl-alpha-D-glucosamine contacts are provided by R330 and K348. The active-site Proton acceptor is the H360. UDP-N-acetyl-alpha-D-glucosamine contacts are provided by Y363 and N374. Residues A377, N383 to Y384, S402, A420, and R437 each bind acetyl-CoA.

This sequence in the N-terminal section; belongs to the N-acetylglucosamine-1-phosphate uridyltransferase family. It in the C-terminal section; belongs to the transferase hexapeptide repeat family. Homotrimer. Mg(2+) serves as cofactor.

The protein resides in the cytoplasm. It carries out the reaction alpha-D-glucosamine 1-phosphate + acetyl-CoA = N-acetyl-alpha-D-glucosamine 1-phosphate + CoA + H(+). It catalyses the reaction N-acetyl-alpha-D-glucosamine 1-phosphate + UTP + H(+) = UDP-N-acetyl-alpha-D-glucosamine + diphosphate. Its pathway is nucleotide-sugar biosynthesis; UDP-N-acetyl-alpha-D-glucosamine biosynthesis; N-acetyl-alpha-D-glucosamine 1-phosphate from alpha-D-glucosamine 6-phosphate (route II): step 2/2. It participates in nucleotide-sugar biosynthesis; UDP-N-acetyl-alpha-D-glucosamine biosynthesis; UDP-N-acetyl-alpha-D-glucosamine from N-acetyl-alpha-D-glucosamine 1-phosphate: step 1/1. The protein operates within bacterial outer membrane biogenesis; LPS lipid A biosynthesis. In terms of biological role, catalyzes the last two sequential reactions in the de novo biosynthetic pathway for UDP-N-acetylglucosamine (UDP-GlcNAc). The C-terminal domain catalyzes the transfer of acetyl group from acetyl coenzyme A to glucosamine-1-phosphate (GlcN-1-P) to produce N-acetylglucosamine-1-phosphate (GlcNAc-1-P), which is converted into UDP-GlcNAc by the transfer of uridine 5-monophosphate (from uridine 5-triphosphate), a reaction catalyzed by the N-terminal domain. The chain is Bifunctional protein GlmU from Shewanella woodyi (strain ATCC 51908 / MS32).